The following is a 524-amino-acid chain: MPPKKEPVISAFERKRLENIANNNAILSGISTTAEKIIPKPAPPKPKRASAPRAKREPVKRETARPTRQSSRLAGLDADADTLKRKAEVEAEVEAEKAKAKKMRVSGDLSLGDIQVEGRKWENGLDGLAGLKGLSARGAQPGIRTFTDEDVKGTTDKGLKDLRLRMSGLKLYEKWPVQGAYPKLVPQRVYSLGFHPTESKPIIFAGDKEGAMGVFDASQEPVKAEDDDDDEEAEIPDPIISAFKTHSRTITSFHFSPVDANAVYSASYDSSIRKLDLDKGVSTEAFAPADADEDLPISAIDMPTSDPNMIIFSTLQGTLGRHDLRTKSSTAEIWGLTDQKIGGFSLHPAQPHLVATASLDRTLKIWDLRKIQGKGDARAPALLGTHDSRLSVSHASWSSAGHVATSSYDDRIKIYNFPDADKWTAGAALTEAQMEPARQIPHNNQTGRWVTILKPQWQRSPRDGLQKFVIGNMNRFVDVFAADGEQLAQLGGDGITAVPAVAHFHPTMDWVAGGNGSGKLCLWM.

The disordered stretch occupies residues 35–79 (EKIIPKPAPPKPKRASAPRAKREPVKRETARPTRQSSRLAGLDAD). Over residues 54-65 (AKREPVKRETAR) the composition is skewed to basic and acidic residues. 7 WD repeats span residues 184–225 (LVPQ…VKAE), 245–285 (THSR…STEA), 295–332 (LPISAIDMPTSDPNMIIFSTLQGTLGRHDLRTKSSTAE), 336–376 (LTDQ…GKGD), 385–425 (THDS…KWTA), 447–490 (GRWV…LAQL), and 493–524 (DGITAVPAVAHFHPTMDWVAGGNGSGKLCLWM).

Belongs to the WD repeat DDB2/WDR76 family.

DNA-binding protein that binds to both single- and double-stranded DNA. Binds preferentially to UV-damaged DNA. May be involved in DNA-metabolic processes. In Chaetomium globosum (strain ATCC 6205 / CBS 148.51 / DSM 1962 / NBRC 6347 / NRRL 1970) (Soil fungus), this protein is DNA damage-binding protein CMR1.